Consider the following 321-residue polypeptide: Putative glucan endo-1,3-beta-glucosidase GVI (321 aa).

Positions 1–6 (LAGVEG) are cleaved as a signal peptide. Catalysis depends on Glu-100, which acts as the Proton donor. Glu-241 serves as the catalytic Nucleophile.

It belongs to the glycosyl hydrolase 17 family.

The catalysed reaction is Hydrolysis of (1-&gt;3)-beta-D-glucosidic linkages in (1-&gt;3)-beta-D-glucans.. In terms of biological role, may provide a degree of protection against microbial invasion of germinated barley grain through its ability to degrade fungal cell wall polysaccharides. In Hordeum vulgare (Barley), this protein is Putative glucan endo-1,3-beta-glucosidase GVI.